Here is a 1158-residue protein sequence, read N- to C-terminus: ATP-dependent helicase/deoxyribonuclease subunit B (1158 aa).

The protein belongs to the helicase family. AddB/RexB type 2 subfamily. Heterodimer of AddA and RexB. Mg(2+) is required as a cofactor.

Its function is as follows. The heterodimer acts as both an ATP-dependent DNA helicase and an ATP-dependent, dual-direction single-stranded exonuclease. Recognizes the chi site generating a DNA molecule suitable for the initiation of homologous recombination. This subunit has 5' -&gt; 3' nuclease activity but not helicase activity. The protein is ATP-dependent helicase/deoxyribonuclease subunit B of Lactobacillus gasseri (strain ATCC 33323 / DSM 20243 / BCRC 14619 / CIP 102991 / JCM 1131 / KCTC 3163 / NCIMB 11718 / NCTC 13722 / AM63).